A 513-amino-acid polypeptide reads, in one-letter code: ATP synthase subunit alpha (513 aa).

169-176 is a binding site for ATP; it reads GDRQTGKT.

It belongs to the ATPase alpha/beta chains family. As to quaternary structure, F-type ATPases have 2 components, CF(1) - the catalytic core - and CF(0) - the membrane proton channel. CF(1) has five subunits: alpha(3), beta(3), gamma(1), delta(1), epsilon(1). CF(0) has three main subunits: a(1), b(2) and c(9-12). The alpha and beta chains form an alternating ring which encloses part of the gamma chain. CF(1) is attached to CF(0) by a central stalk formed by the gamma and epsilon chains, while a peripheral stalk is formed by the delta and b chains.

It localises to the cell inner membrane. The enzyme catalyses ATP + H2O + 4 H(+)(in) = ADP + phosphate + 5 H(+)(out). Its function is as follows. Produces ATP from ADP in the presence of a proton gradient across the membrane. The alpha chain is a regulatory subunit. This Ralstonia nicotianae (strain ATCC BAA-1114 / GMI1000) (Ralstonia solanacearum) protein is ATP synthase subunit alpha.